Reading from the N-terminus, the 644-residue chain is Exoribonuclease 2 (644 aa).

The RNB domain maps to 189–516 (REDLTALDFV…NHRLLKAVIK (328 aa)). The 83-residue stretch at 561–643 (DTRFAAEIVD…ETRSIIARPV (83 aa)) folds into the S1 motif domain.

The protein belongs to the RNR ribonuclease family. RNase II subfamily.

The protein resides in the cytoplasm. It carries out the reaction Exonucleolytic cleavage in the 3'- to 5'-direction to yield nucleoside 5'-phosphates.. Functionally, involved in mRNA degradation. Hydrolyzes single-stranded polyribonucleotides processively in the 3' to 5' direction. This chain is Exoribonuclease 2, found in Escherichia coli O139:H28 (strain E24377A / ETEC).